The primary structure comprises 361 residues: Holliday junction branch migration complex subunit RuvB (361 aa).

2 stretches are compositionally biased toward polar residues: residues 1-15 (MAIK…SPNV) and 28-40 (ERST…QQEA). The tract at residues 1 to 41 (MAIKRSGNNNLSPNVKSDLLSPEVIPQERSTSPELEQQEAS) is disordered. The segment at 13 to 203 (PNVKSDLLSP…FGLIQRLRFY (191 aa)) is large ATPase domain (RuvB-L). Residues L42, R43, G84, K87, T88, T89, 150 to 152 (EDF), R193, Y203, and R240 each bind ATP. A Mg(2+)-binding site is contributed by T88. Residues 204–274 (EVDELQQIIL…LASEALDLYQ (71 aa)) form a small ATPAse domain (RuvB-S) region. Residues 277 to 361 (KRGLDWTDRL…PTPLLPWKES (85 aa)) form a head domain (RuvB-H) region. The DNA site is built by R332 and R337.

The protein belongs to the RuvB family. As to quaternary structure, homohexamer. Forms an RuvA(8)-RuvB(12)-Holliday junction (HJ) complex. HJ DNA is sandwiched between 2 RuvA tetramers; dsDNA enters through RuvA and exits via RuvB. An RuvB hexamer assembles on each DNA strand where it exits the tetramer. Each RuvB hexamer is contacted by two RuvA subunits (via domain III) on 2 adjacent RuvB subunits; this complex drives branch migration. In the full resolvosome a probable DNA-RuvA(4)-RuvB(12)-RuvC(2) complex forms which resolves the HJ.

It localises to the cytoplasm. The catalysed reaction is ATP + H2O = ADP + phosphate + H(+). Functionally, the RuvA-RuvB-RuvC complex processes Holliday junction (HJ) DNA during genetic recombination and DNA repair, while the RuvA-RuvB complex plays an important role in the rescue of blocked DNA replication forks via replication fork reversal (RFR). RuvA specifically binds to HJ cruciform DNA, conferring on it an open structure. The RuvB hexamer acts as an ATP-dependent pump, pulling dsDNA into and through the RuvAB complex. RuvB forms 2 homohexamers on either side of HJ DNA bound by 1 or 2 RuvA tetramers; 4 subunits per hexamer contact DNA at a time. Coordinated motions by a converter formed by DNA-disengaged RuvB subunits stimulates ATP hydrolysis and nucleotide exchange. Immobilization of the converter enables RuvB to convert the ATP-contained energy into a lever motion, pulling 2 nucleotides of DNA out of the RuvA tetramer per ATP hydrolyzed, thus driving DNA branch migration. The RuvB motors rotate together with the DNA substrate, which together with the progressing nucleotide cycle form the mechanistic basis for DNA recombination by continuous HJ branch migration. Branch migration allows RuvC to scan DNA until it finds its consensus sequence, where it cleaves and resolves cruciform DNA. In terms of biological role, participates in UV-tolerance of Synechocystis PCC 6803. The sequence is that of Holliday junction branch migration complex subunit RuvB from Synechocystis sp. (strain ATCC 27184 / PCC 6803 / Kazusa).